The following is a 432-amino-acid chain: Serine hydroxymethyltransferase 1 (432 aa).

(6S)-5,6,7,8-tetrahydrofolate-binding positions include Leu131 and 135-137 (GHL). Residue Lys240 is modified to N6-(pyridoxal phosphate)lysine.

Belongs to the SHMT family. Homodimer. It depends on pyridoxal 5'-phosphate as a cofactor.

Its subcellular location is the cytoplasm. It catalyses the reaction (6R)-5,10-methylene-5,6,7,8-tetrahydrofolate + glycine + H2O = (6S)-5,6,7,8-tetrahydrofolate + L-serine. It participates in one-carbon metabolism; tetrahydrofolate interconversion. Its pathway is amino-acid biosynthesis; glycine biosynthesis; glycine from L-serine: step 1/1. Functionally, catalyzes the reversible interconversion of serine and glycine with tetrahydrofolate (THF) serving as the one-carbon carrier. This reaction serves as the major source of one-carbon groups required for the biosynthesis of purines, thymidylate, methionine, and other important biomolecules. Also exhibits THF-independent aldolase activity toward beta-hydroxyamino acids, producing glycine and aldehydes, via a retro-aldol mechanism. In Rhodopseudomonas palustris (strain ATCC BAA-98 / CGA009), this protein is Serine hydroxymethyltransferase 1.